Here is a 247-residue protein sequence, read N- to C-terminus: 2,3-bisphosphoglycerate-dependent phosphoglycerate mutase (247 aa).

Residues Arg8 to Asn15, Thr21 to Gly22, Arg60, Glu87 to Tyr90, Lys98, Arg114 to Arg115, and Gly183 to Asn184 each bind substrate. His9 serves as the catalytic Tele-phosphohistidine intermediate. Residue Glu87 is the Proton donor/acceptor of the active site.

This sequence belongs to the phosphoglycerate mutase family. BPG-dependent PGAM subfamily.

The catalysed reaction is (2R)-2-phosphoglycerate = (2R)-3-phosphoglycerate. It functions in the pathway carbohydrate degradation; glycolysis; pyruvate from D-glyceraldehyde 3-phosphate: step 3/5. Catalyzes the interconversion of 2-phosphoglycerate and 3-phosphoglycerate. This is 2,3-bisphosphoglycerate-dependent phosphoglycerate mutase from Chlorobium chlorochromatii (strain CaD3).